Consider the following 508-residue polypeptide: UTP--glucose-1-phosphate uridylyltransferase (508 aa).

Ser-2 bears the Blocked amino end (Ser) mark. At Ser-13 the chain carries Phosphoserine. Residues 113–116 (LNGG), Lys-127, Gln-190, and Gly-222 contribute to the UTP site. 115–116 (GG) is a substrate binding site. Residue Lys-127 coordinates Mg(2+). Residues His-223 and 251-253 (NID) each bind substrate. UTP-binding residues include Asp-253 and Lys-396. Residue Asp-253 coordinates Mg(2+). Residue Lys-396 is part of the active site. Thr-426 carries the post-translational modification Phosphothreonine. Residue Ser-434 is modified to Phosphoserine. Residue Lys-438 is modified to N6-acetyllysine. Phosphoserine occurs at positions 448 and 461. Positions 457-508 (HLTVSGDVTFGKNVSLKGTVIIIANHGDRIDIPPGAVLENKIVSGNLRILDH) are oligomerization. The tract at residues 502–503 (NL) is critical for end-to-end subunit interaction.

The protein belongs to the UDPGP type 1 family. As to quaternary structure, homooctamer.

The protein resides in the cytoplasm. It carries out the reaction alpha-D-glucose 1-phosphate + UTP + H(+) = UDP-alpha-D-glucose + diphosphate. The protein operates within glycan biosynthesis; glycogen biosynthesis. Functionally, UTP--glucose-1-phosphate uridylyltransferase catalyzing the conversion of glucose-1-phosphate into UDP-glucose, a crucial precursor for the production of glycogen. The chain is UTP--glucose-1-phosphate uridylyltransferase (UGP2) from Bos taurus (Bovine).